The primary structure comprises 171 residues: Putative metal-dependent hydrolase BH0277 (171 aa).

Zn(2+) is bound by residues H64, H155, and H159.

It belongs to the metal hydrolase YfiT family. As to quaternary structure, homodimer. It depends on Zn(2+) as a cofactor.

The protein localises to the cytoplasm. Its function is as follows. Possible metal-dependent hydrolase. This Halalkalibacterium halodurans (strain ATCC BAA-125 / DSM 18197 / FERM 7344 / JCM 9153 / C-125) (Bacillus halodurans) protein is Putative metal-dependent hydrolase BH0277.